The chain runs to 352 residues: NADH-ubiquinone oxidoreductase chain 2 (352 aa).

A run of 12 helical transmembrane segments spans residues 4–24, 26–46, 67–87, 96–116, 124–144, 148–168, 177–197, 198–218, 241–261, 264–284, 290–310, and 332–352; these read IVSTFLFVTVVSGTIIVVSSE, WFIIWVGLELSTLALVPILCS, AALLLNGALGQAWLTGSWSIL, ICLSIALAFKIGLAPVHFWFP, FFQGLIIATWQKIAPLILMFY, LGFSYLLITPSLISVLIGGWG, KILAFSSIGNMGWLVITSAYS, FNAAIIMLVIYLIINTSLFLL, VALVLLVMLSLGGLPPLTGFI, FTSLYFLVANNFIILSSIMII, YFFYLRISFNTSLFLFPQHII, and SVSTVLSTLAIPLTLPLYIIT.

This sequence belongs to the complex I subunit 2 family.

Its subcellular location is the mitochondrion inner membrane. It carries out the reaction a ubiquinone + NADH + 5 H(+)(in) = a ubiquinol + NAD(+) + 4 H(+)(out). Its function is as follows. Core subunit of the mitochondrial membrane respiratory chain NADH dehydrogenase (Complex I) that is believed to belong to the minimal assembly required for catalysis. Complex I functions in the transfer of electrons from NADH to the respiratory chain. The immediate electron acceptor for the enzyme is believed to be ubiquinone. In Strongylocentrotus purpuratus (Purple sea urchin), this protein is NADH-ubiquinone oxidoreductase chain 2 (ND2).